We begin with the raw amino-acid sequence, 405 residues long: Formate-dependent phosphoribosylglycinamide formyltransferase (405 aa).

Residues 27–28 and Glu-87 each bind N(1)-(5-phospho-beta-D-ribosyl)glycinamide; that span reads EL. ATP-binding positions include Arg-120, Lys-162, 167–172, 202–205, and Glu-210; these read SSGKGQ and EGFI. Residues 125 to 320 form the ATP-grasp domain; that stretch reads RLAAETLGLP…EFELHARALL (196 aa). Positions 279 and 291 each coordinate Mg(2+). N(1)-(5-phospho-beta-D-ribosyl)glycinamide contacts are provided by residues Asp-298, Lys-367, and 374-375; that span reads RR.

The protein belongs to the PurK/PurT family. Homodimer.

It catalyses the reaction N(1)-(5-phospho-beta-D-ribosyl)glycinamide + formate + ATP = N(2)-formyl-N(1)-(5-phospho-beta-D-ribosyl)glycinamide + ADP + phosphate + H(+). It participates in purine metabolism; IMP biosynthesis via de novo pathway; N(2)-formyl-N(1)-(5-phospho-D-ribosyl)glycinamide from N(1)-(5-phospho-D-ribosyl)glycinamide (formate route): step 1/1. Functionally, involved in the de novo purine biosynthesis. Catalyzes the transfer of formate to 5-phospho-ribosyl-glycinamide (GAR), producing 5-phospho-ribosyl-N-formylglycinamide (FGAR). Formate is provided by PurU via hydrolysis of 10-formyl-tetrahydrofolate. This Bordetella avium (strain 197N) protein is Formate-dependent phosphoribosylglycinamide formyltransferase.